The primary structure comprises 251 residues: Cell division protein ZapD (251 aa).

Belongs to the ZapD family. Interacts with FtsZ.

Its subcellular location is the cytoplasm. Cell division factor that enhances FtsZ-ring assembly. Directly interacts with FtsZ and promotes bundling of FtsZ protofilaments, with a reduction in FtsZ GTPase activity. The polypeptide is Cell division protein ZapD (Azoarcus sp. (strain BH72)).